The chain runs to 510 residues: ATP synthase subunit alpha (510 aa).

169 to 176 (GDRQTGKT) serves as a coordination point for ATP.

It belongs to the ATPase alpha/beta chains family. As to quaternary structure, F-type ATPases have 2 components, CF(1) - the catalytic core - and CF(0) - the membrane proton channel. CF(1) has five subunits: alpha(3), beta(3), gamma(1), delta(1), epsilon(1). CF(0) has four main subunits: a(1), b(1), b'(1) and c(9-12).

The protein resides in the cell inner membrane. The catalysed reaction is ATP + H2O + 4 H(+)(in) = ADP + phosphate + 5 H(+)(out). Produces ATP from ADP in the presence of a proton gradient across the membrane. The alpha chain is a regulatory subunit. The chain is ATP synthase subunit alpha from Rhodopseudomonas palustris (strain BisB5).